We begin with the raw amino-acid sequence, 403 residues long: Tyrosine--tRNA ligase (403 aa).

A 'HIGH' region motif is present at residues proline 42–histidine 51. The 'KMSKS' region signature appears at lysine 226 to serine 230. Lysine 229 is a binding site for ATP. Positions methionine 336–leucine 396 constitute an S4 RNA-binding domain.

This sequence belongs to the class-I aminoacyl-tRNA synthetase family. TyrS type 2 subfamily. As to quaternary structure, homodimer.

It localises to the cytoplasm. The catalysed reaction is tRNA(Tyr) + L-tyrosine + ATP = L-tyrosyl-tRNA(Tyr) + AMP + diphosphate + H(+). Functionally, catalyzes the attachment of tyrosine to tRNA(Tyr) in a two-step reaction: tyrosine is first activated by ATP to form Tyr-AMP and then transferred to the acceptor end of tRNA(Tyr). The polypeptide is Tyrosine--tRNA ligase (Pseudomonas savastanoi pv. phaseolicola (strain 1448A / Race 6) (Pseudomonas syringae pv. phaseolicola (strain 1448A / Race 6))).